Consider the following 274-residue polypeptide: 2,3,4,5-tetrahydropyridine-2,6-dicarboxylate N-succinyltransferase (274 aa).

This sequence belongs to the transferase hexapeptide repeat family.

The protein localises to the cytoplasm. It catalyses the reaction (S)-2,3,4,5-tetrahydrodipicolinate + succinyl-CoA + H2O = (S)-2-succinylamino-6-oxoheptanedioate + CoA. The protein operates within amino-acid biosynthesis; L-lysine biosynthesis via DAP pathway; LL-2,6-diaminopimelate from (S)-tetrahydrodipicolinate (succinylase route): step 1/3. This chain is 2,3,4,5-tetrahydropyridine-2,6-dicarboxylate N-succinyltransferase, found in Escherichia fergusonii (strain ATCC 35469 / DSM 13698 / CCUG 18766 / IAM 14443 / JCM 21226 / LMG 7866 / NBRC 102419 / NCTC 12128 / CDC 0568-73).